Here is a 512-residue protein sequence, read N- to C-terminus: Cytochrome P450 monooxygenase ABA1 (512 aa).

A helical membrane pass occupies residues 13-32 (HWLSGILAIATVYLATSYII). Residue Cys458 coordinates heme.

This sequence belongs to the cytochrome P450 family. Heme serves as cofactor.

It localises to the membrane. It functions in the pathway hormone biosynthesis. Its function is as follows. Cytochrome P450 monooxygenase involved in the biosynthesis of abscisic acid (ABA), a phytohormone that acts antagonistically toward salicylic acid (SA), jasmonic acid (JA) and ethylene (ETH) signaling, to impede plant defense responses. During pathogen-host interaction, ABA plays a dual role in disease severity by increasing plant susceptibility and accelerating pathogenesis in the fungus itself. The first step of the pathway catalyzes the reaction from farnesyl diphosphate to alpha-ionylideneethane performed by the alpha-ionylideneethane synthase ABA3 via a three-step reaction mechanism involving 2 neutral intermediates, beta-farnesene and allofarnesene. The cytochrome P450 monooxygenase ABA1 might then be involved in the conversion of alpha-ionylideneethane to alpha-ionylideneacetic acid. Alpha-ionylideneacetic acid is further converted to abscisic acid in 2 steps involving the cytochrome P450 monooxygenase ABA2 and the short-chain dehydrogenase/reductase ABA4, via the intermediates 1'-deoxy-ABA or 1',4'-trans-diol-ABA, depending on the order of action of these 2 enzymes. ABA2 is responsible for the hydroxylation of carbon atom C-1' and ABA4 might be involved in the oxidation of the C-4' carbon atom. This chain is Cytochrome P450 monooxygenase ABA1, found in Pyricularia oryzae (strain Y34) (Rice blast fungus).